Consider the following 187-residue polypeptide: Putative gamma-glutamylcyclotransferase At3g02910 (187 aa).

17-20 provides a ligand contact to substrate; sequence YGTL. Glutamate 92 serves as the catalytic Proton acceptor.

Belongs to the gamma-glutamylcyclotransferase family.

In terms of biological role, putative gamma-glutamylcyclotransferase. The chain is Putative gamma-glutamylcyclotransferase At3g02910 from Arabidopsis thaliana (Mouse-ear cress).